The sequence spans 114 residues: MNVLLGSVVIFATFVTLCNASCYFIPNEGVPGDSTRKCMDLKGNKHPINSEWQTDNCETCTCYETEISCCTLVSTPVGYDKDNCQRIFKKEDCKYIVVEKKDPKKTCSVSEWII.

Residues 1-20 (MNVLLGSVVIFATFVTLCNA) form the signal peptide. Disulfide bonds link Cys22-Cys70, Cys38-Cys62, Cys57-Cys93, Cys60-Cys69, and Cys84-Cys107.

Belongs to the beta-microseminoprotein family. As to quaternary structure, homodimer; Interacts with PI16. In terms of tissue distribution, strongly expressed in prostate, liver, kidney, breast and penis. Also expressed in pancreas, esophagus, stomach, deodenum, colon, trachea, lung, salivary glands and fallopian tube. PSP94 is expressed in lung and breast, whereas PSP57 is found in kidney and bladder.

Its subcellular location is the secreted. This chain is Beta-microseminoprotein (MSMB), found in Homo sapiens (Human).